The following is a 320-amino-acid chain: MSKPGRTILASKVAETFNTEIINNVEEYKKTHNGQGPLLVGFLANNDPAAKMYATWTQKTSESMGFRYDLRVIEDKDFLEEAIIQANGDDSVNGIMVYFPVFGNAQDQYLQQVVCKEKDVEGLNHVYYQNLYHNVRYLDKENRLKSILPCTPLAIVKILEFLKIYNNLLPEGNRLYGKKCIVINRSEIVGRPLAALLANDGATVYSVDVNNIQKFTRGESLKLNKHHVEDLGEYSEDLLKKCSLDSDVVITGVPSENYKFPTEYIKEGAVCINFACTKNFSDDVKEKASLYVPMTGKVTIAMLLRNMLRLVRNVELSKEK.

Residue Cys-150 is part of the active site. NAD(+) is bound by residues 185–186 (RS), 208–209 (DV), and 274–276 (FAC).

Belongs to the tetrahydrofolate dehydrogenase/cyclohydrolase family. As to quaternary structure, homodimer. In terms of processing, the N-terminus is blocked.

It localises to the cytoplasm. Its subcellular location is the nucleus. The catalysed reaction is (6R)-5,10-methylene-5,6,7,8-tetrahydrofolate + NAD(+) = (6R)-5,10-methenyltetrahydrofolate + NADH. Its function is as follows. Catalyzes oxidation of cytoplasmic one-carbon units for purine biosynthesis. This is Methylenetetrahydrofolate dehydrogenase [NAD(+)] (MTD1) from Saccharomyces cerevisiae (strain ATCC 204508 / S288c) (Baker's yeast).